A 502-amino-acid polypeptide reads, in one-letter code: Cytochrome P450 71B17 (502 aa).

A helical transmembrane segment spans residues 1–21; that stretch reads MAISLLCLFLITFVSLTIVGC. A heme-binding site is contributed by C444.

Belongs to the cytochrome P450 family. Heme serves as cofactor.

The protein resides in the membrane. The protein is Cytochrome P450 71B17 (CYP71B17) of Arabidopsis thaliana (Mouse-ear cress).